The primary structure comprises 563 residues: Putative cytochrome c oxidase subunit 1-beta (563 aa).

7 helical membrane-spanning segments follow: residues 34-54 (IGHL…VMAL), 76-96 (LFTL…FAGF), 117-137 (MLSY…LAVP), 164-184 (MWIM…VNFL), 208-228 (LFTS…LLVL), 252-272 (LFWF…FGII), and 284-304 (IFGY…SVVV). Histidine 80 contributes to the Fe(II)-heme a binding site. Cu cation contacts are provided by histidine 258 and tyrosine 262. Positions 258 to 262 (HPEVY) form a cross-link, 1'-histidyl-3'-tyrosine (His-Tyr). Residues histidine 307 and histidine 308 each coordinate Cu cation. Transmembrane regions (helical) follow at residues 309–329 (MFAT…LIAV) and 353–373 (MLWA…GVIL). Histidine 391 contacts heme a3. Transmembrane regions (helical) follow at residues 392–412 (FHYV…YFWW), 427–447 (IHFW…HWLG), and 470–490 (LSTI…YNVW). A Fe(II)-heme a-binding site is contributed by histidine 393. The interval 536 to 563 (AFDLHHPAHAGEAPQPEPKHEQADREPS) is disordered. Residues 552–563 (EPKHEQADREPS) show a composition bias toward basic and acidic residues.

This sequence belongs to the heme-copper respiratory oxidase family. Associates with subunits II, III and IV to form cytochrome c oxidase. The cofactor is Cu(2+). Requires heme as cofactor.

The protein resides in the cell membrane. The catalysed reaction is 4 Fe(II)-[cytochrome c] + O2 + 8 H(+)(in) = 4 Fe(III)-[cytochrome c] + 2 H2O + 4 H(+)(out). Its pathway is energy metabolism; oxidative phosphorylation. Its function is as follows. Cytochrome c oxidase is the component of the respiratory chain that catalyzes the reduction of oxygen to water. Subunits 1-3 form the functional core of the enzyme complex. CO I is the catalytic subunit of the enzyme. Electrons originating in cytochrome c are transferred via the copper A center of subunit 2 and heme A of subunit 1 to the bimetallic center formed by heme A3 and copper B. This chain is Putative cytochrome c oxidase subunit 1-beta (ctaD2), found in Streptomyces avermitilis (strain ATCC 31267 / DSM 46492 / JCM 5070 / NBRC 14893 / NCIMB 12804 / NRRL 8165 / MA-4680).